A 644-amino-acid chain; its full sequence is Exoribonuclease 2 (644 aa).

The region spanning 189–516 (REDLTSLDFV…NHRLLKAVIK (328 aa)) is the RNB domain. The region spanning 561 to 643 (GTRFAAEIVD…ETRSIIARPV (83 aa)) is the S1 motif domain.

It belongs to the RNR ribonuclease family. RNase II subfamily.

It localises to the cytoplasm. It carries out the reaction Exonucleolytic cleavage in the 3'- to 5'-direction to yield nucleoside 5'-phosphates.. Its function is as follows. Involved in mRNA degradation. Hydrolyzes single-stranded polyribonucleotides processively in the 3' to 5' direction. In Shigella flexneri, this protein is Exoribonuclease 2.